Consider the following 831-residue polypeptide: Probable glucan 1,3-beta-glucosidase D (831 aa).

Composition is skewed to basic and acidic residues over residues 1-24 (MPSH…YREV), 44-56 (RRDD…RSHE), 79-93 (RSHD…RSRA), 102-115 (SRRD…EYRR), 137-151 (RDGQ…DREA), and 198-213 (QRER…MESK). 2 disordered regions span residues 1–179 (MPSH…SGSH) and 192–241 (HYDE…GQSK). Over 1–297 (MPSHSRSRDR…AQPPFWKRKK (297 aa)) the chain is Cytoplasmic. Residues 298–318 (WWIVIGVLVVVLAIVIPVAVV) form a helical; Signal-anchor for type II membrane protein membrane-spanning segment. At 319 to 831 (MSKKHGHDDD…PSFGDLPEYY (513 aa)) the chain is on the extracellular side. N-linked (GlcNAc...) asparagine glycosylation is found at asparagine 376, asparagine 381, asparagine 393, asparagine 410, asparagine 442, asparagine 546, and asparagine 558. Glutamate 597 serves as the catalytic Proton donor. N-linked (GlcNAc...) asparagine glycosylation is found at asparagine 610, asparagine 636, asparagine 669, and asparagine 689. Glutamate 702 serves as the catalytic Nucleophile.

This sequence belongs to the glycosyl hydrolase 5 (cellulase A) family.

It localises to the cell membrane. It carries out the reaction Successive hydrolysis of beta-D-glucose units from the non-reducing ends of (1-&gt;3)-beta-D-glucans, releasing alpha-glucose.. Glucosidase involved in the degradation of cellulosic biomass. Active on lichenan. The chain is Probable glucan 1,3-beta-glucosidase D (exgD) from Aspergillus oryzae (strain ATCC 42149 / RIB 40) (Yellow koji mold).